We begin with the raw amino-acid sequence, 377 residues long: Succinyl-diaminopimelate desuccinylase (377 aa).

Histidine 66 contributes to the Zn(2+) binding site. The active site involves aspartate 68. Aspartate 99 contributes to the Zn(2+) binding site. Glutamate 133 serves as the catalytic Proton acceptor. Residues glutamate 134, glutamate 162, and histidine 348 each coordinate Zn(2+).

It belongs to the peptidase M20A family. DapE subfamily. In terms of assembly, homodimer. Zn(2+) is required as a cofactor. It depends on Co(2+) as a cofactor.

The catalysed reaction is N-succinyl-(2S,6S)-2,6-diaminopimelate + H2O = (2S,6S)-2,6-diaminopimelate + succinate. Its pathway is amino-acid biosynthesis; L-lysine biosynthesis via DAP pathway; LL-2,6-diaminopimelate from (S)-tetrahydrodipicolinate (succinylase route): step 3/3. In terms of biological role, catalyzes the hydrolysis of N-succinyl-L,L-diaminopimelic acid (SDAP), forming succinate and LL-2,6-diaminopimelate (DAP), an intermediate involved in the bacterial biosynthesis of lysine and meso-diaminopimelic acid, an essential component of bacterial cell walls. The protein is Succinyl-diaminopimelate desuccinylase of Bordetella avium (strain 197N).